The sequence spans 409 residues: Indian hedgehog protein (409 aa).

A signal peptide spans 1–23 (MQLPKVVLLLCAAALLLSGAVRG). A lipid anchor (N-palmitoyl cysteine) is attached at Cys-24. Ca(2+)-binding residues include Glu-89, Glu-90, Asp-95, Thr-125, Glu-126, Asp-129, and Asp-131. Zn(2+) contacts are provided by His-140, Asp-147, and His-182. Gly-197 carries the Cholesterol glycine ester lipid modification.

Belongs to the hedgehog family. Multimer. As to quaternary structure, interacts with BOC and CDON. Interacts with PTCH1. Interacts with glypican GPC3. In terms of processing, cholesterylation is required for N-product targeting to lipid rafts and multimerization. The C-terminal domain displays an autoproteolysis activity and a cholesterol transferase activity. Both activities result in the cleavage of the full-length protein and covalent attachment of a cholesterol moiety to the C-terminal of the newly generated N-product. The N-product is the active species in both local and long-range signaling, whereas the C-product is degraded in the endoplasmic reticulum. Post-translationally, N-palmitoylation by HHAT of N-product is required for indian hedgehog protein N-product multimerization and full activity. In terms of tissue distribution, expressed in the marginal zone at early gastrulation. At stage 14, expression begins in the neural plate with expression becoming more prominent in the anterodorsal area at neural tube closure. At this stage, also expressed diffusely in the somitic and pre-somitic mesoderm. By the early tadpole (stages 28-30), expression is widespread throughout anterior structures with highest levels in the otic vesicle, the eye, and the branchial arches.

It is found in the cell membrane. It localises to the endoplasmic reticulum membrane. Its subcellular location is the golgi apparatus membrane. The protein resides in the secreted. The catalysed reaction is glycyl-L-cysteinyl-[protein] + cholesterol + H(+) = [protein]-C-terminal glycyl cholesterol ester + N-terminal L-cysteinyl-[protein]. Signal involved in the early induction and patterning of anterodorsal ectoderm, nervous system and somites. Induces ectopic cement gland formation in embryos. It is involved in the regulation of endochondral skeleton formation, and the development of retinal pigment epithelium (RPE), photoreceptors and periocular tissues. Its function is as follows. The C-terminal part of the indian hedgehog protein precursor displays an autoproteolysis and a cholesterol transferase activity. Both activities result in the cleavage of the full-length protein into two parts followed by the covalent attachment of a cholesterol moiety to the C-terminal of the newly generated N-product. Both activities occur in the endoplasmic reticulum. In terms of biological role, the dually lipidated indian hedgehog protein N-product is a morphogen which is essential for a variety of patterning events during development. Binds to the patched (PTCH1) receptor, which functions in association with smoothened (SMO), to activate the transcription of target genes. Signal involved in the early induction and patterning of anterodorsal ectoderm, nervous system and somites. Induces ectopic cement gland formation in embryos. The chain is Indian hedgehog protein from Xenopus laevis (African clawed frog).